The chain runs to 109 residues: Nucleoid-associated protein HD_0326 (109 aa).

It belongs to the YbaB/EbfC family. Homodimer.

It is found in the cytoplasm. Its subcellular location is the nucleoid. In terms of biological role, binds to DNA and alters its conformation. May be involved in regulation of gene expression, nucleoid organization and DNA protection. The protein is Nucleoid-associated protein HD_0326 of Haemophilus ducreyi (strain 35000HP / ATCC 700724).